The following is a 106-amino-acid chain: Small ribosomal subunit protein bS18 (106 aa).

Residues 1–32 are disordered; the sequence is MRWMKIMSEDMKQEQSGEGRGGRGGPARPLAS. The segment covering 7-21 has biased composition (basic and acidic residues); that stretch reads MSEDMKQEQSGEGRG.

It belongs to the bacterial ribosomal protein bS18 family. Part of the 30S ribosomal subunit. Forms a tight heterodimer with protein bS6.

In terms of biological role, binds as a heterodimer with protein bS6 to the central domain of the 16S rRNA, where it helps stabilize the platform of the 30S subunit. This Magnetococcus marinus (strain ATCC BAA-1437 / JCM 17883 / MC-1) protein is Small ribosomal subunit protein bS18.